We begin with the raw amino-acid sequence, 495 residues long: N-succinylglutamate 5-semialdehyde dehydrogenase (495 aa).

An NAD(+)-binding site is contributed by 220–225 (GSAGTG). Catalysis depends on residues Glu-243 and Cys-277.

The protein belongs to the aldehyde dehydrogenase family. AstD subfamily.

It catalyses the reaction N-succinyl-L-glutamate 5-semialdehyde + NAD(+) + H2O = N-succinyl-L-glutamate + NADH + 2 H(+). It functions in the pathway amino-acid degradation; L-arginine degradation via AST pathway; L-glutamate and succinate from L-arginine: step 4/5. In terms of biological role, catalyzes the NAD-dependent reduction of succinylglutamate semialdehyde into succinylglutamate. This is N-succinylglutamate 5-semialdehyde dehydrogenase from Enterobacter sp. (strain 638).